The following is a 117-amino-acid chain: Large ribosomal subunit protein bL20 (117 aa).

Belongs to the bacterial ribosomal protein bL20 family.

Binds directly to 23S ribosomal RNA and is necessary for the in vitro assembly process of the 50S ribosomal subunit. It is not involved in the protein synthesizing functions of that subunit. This Rickettsia typhi (strain ATCC VR-144 / Wilmington) protein is Large ribosomal subunit protein bL20.